The sequence spans 132 residues: Interleukin-5 (132 aa).

The first 17 residues, 1 to 17 (MRLPLQLSILTLAWVWA), serve as a signal peptide directing secretion. N-linked (GlcNAc...) asparagine glycosylation is found at N45, N74, and N88.

Belongs to the IL-5 family. In terms of assembly, homodimer; disulfide-linked. Interacts with IL5RA. Interacts with CSF2RB.

The protein resides in the secreted. Functionally, homodimeric cytokine expressed predominantly by T-lymphocytes and NK cells that plays an important role in the survival, differentiation, and chemotaxis of eosinophils. Also acts on activated and resting B-cells to induce immunoglobulin production, growth, and differentiation. Mechanistically, exerts its biological effects through a receptor composed of IL5RA subunit and the cytokine receptor common subunit beta/CSF2RB. Binding to the receptor leads to activation of various kinases including LYN, SYK and JAK2 and thereby propagates signals through the RAS-MAPK and JAK-STAT5 pathways respectively. The chain is Interleukin-5 (IL5) from Meriones unguiculatus (Mongolian jird).